Here is a 241-residue protein sequence, read N- to C-terminus: Putative hydrolase 080R (241 aa).

The region spanning 50–241 (FPDLSFNLMV…VIKVQKIMIL (192 aa)) is the Nudix hydrolase domain. The Nudix box motif lies at 136-157 (GHCNGNEPVLSTLLREFREETT). Residues glutamate 151, glutamate 155, and aspartate 204 each coordinate Mg(2+).

This sequence belongs to the Nudix hydrolase family.

This chain is Putative hydrolase 080R, found in Aedes vexans (Inland floodwater mosquito).